The chain runs to 528 residues: Ladinin-1 (528 aa).

The interval 1–404 (MSVSRKDWSA…NSETPLTRSA (404 aa)) is disordered. Residues S38, S56, S62, S72, and S76 each carry the phosphoserine modification. The span at 88–97 (RTRKERRQRR) shows a compositional bias: basic residues. Residue S119 is modified to Phosphoserine. The span at 134–173 (KKVEALPRRRLSREQRGPWAQDEERLKNRELAEGEKRLPE) shows a compositional bias: basic and acidic residues. SEK repeat units lie at residues 184–186 (SEK), 190–192 (SEK), 202–204 (SEK), and 208–210 (SEK). A 6 X SEK repeats region spans residues 184–281 (SEKTPVSEKT…MQERKLVSEK (98 aa)). 2 stretches are compositionally biased toward basic and acidic residues: residues 218 to 231 (SLTE…KLVP) and 267 to 279 (IVSE…KLVS). SEK repeat units follow at residues 269–271 (SEK) and 279–281 (SEK). Residues 304-316 (EQPQTTGGSQATT) are compositionally biased toward polar residues. A phosphoserine mark is found at S328, S358, S367, S405, and S496. The segment covering 365–377 (TPSPTLLTYSSSL) has biased composition (low complexity). Positions 492 to 528 (KTQDSGDHGSQEVRKEASVTKRAQWGSKPSTSLDAEV) are disordered. Positions 495–510 (DSGDHGSQEVRKEASV) are enriched in basic and acidic residues. Residues 518 to 528 (SKPSTSLDAEV) are compositionally biased toward polar residues.

As to expression, expressed in kidney, lung and keratinocytes followed by liver, spleen and brain. Not expressed in testis, skeletal and heart muscle and in fibroblasts.

It localises to the secreted. It is found in the extracellular space. The protein localises to the extracellular matrix. Its subcellular location is the basement membrane. In terms of biological role, anchoring filament protein which is a component of the basement membrane zone. The protein is Ladinin-1 (Lad1) of Mus musculus (Mouse).